The sequence spans 255 residues: 5'-nucleotidase SurE (255 aa).

Residues Asp-16, Asp-17, Ser-47, and Asn-100 each contribute to the a divalent metal cation site.

It belongs to the SurE nucleotidase family. Requires a divalent metal cation as cofactor.

The protein resides in the cytoplasm. The enzyme catalyses a ribonucleoside 5'-phosphate + H2O = a ribonucleoside + phosphate. Functionally, nucleotidase that shows phosphatase activity on nucleoside 5'-monophosphates. The sequence is that of 5'-nucleotidase SurE from Vibrio vulnificus (strain CMCP6).